We begin with the raw amino-acid sequence, 163 residues long: Cell division protein SepF (163 aa).

A disordered region spans residues 25-53 (SVAPHSGEERESAFSRRSAERAERTERPT). Residues 30–51 (SGEERESAFSRRSAERAERTER) are compositionally biased toward basic and acidic residues.

The protein belongs to the SepF family. In terms of assembly, homodimer. Interacts with FtsZ.

Its subcellular location is the cytoplasm. Its function is as follows. Cell division protein that is part of the divisome complex and is recruited early to the Z-ring. Probably stimulates Z-ring formation, perhaps through the cross-linking of FtsZ protofilaments. Its function overlaps with FtsA. The polypeptide is Cell division protein SepF (Heliobacterium modesticaldum (strain ATCC 51547 / Ice1)).